The sequence spans 822 residues: Putative ESX-1 scaffolding and assembly protein SaeB (822 aa).

In terms of biological role, may be involved in assembly of the ESX-1 / type VII specialized secretion system (T7SS), which exports several proteins including EsxA and EsxB. Involved in DNA conjugation in recipient (MKD8) but not donor (mc(2)155) strain. This is Putative ESX-1 scaffolding and assembly protein SaeB (saeB) from Mycolicibacterium smegmatis (strain MKD8) (Mycobacterium smegmatis).